We begin with the raw amino-acid sequence, 159 residues long: Ribosomal RNA large subunit methyltransferase H (159 aa).

S-adenosyl-L-methionine is bound by residues leucine 76, glycine 108, and 127–132 (FSKMTF).

This sequence belongs to the RNA methyltransferase RlmH family. As to quaternary structure, homodimer.

It localises to the cytoplasm. The enzyme catalyses pseudouridine(1915) in 23S rRNA + S-adenosyl-L-methionine = N(3)-methylpseudouridine(1915) in 23S rRNA + S-adenosyl-L-homocysteine + H(+). Specifically methylates the pseudouridine at position 1915 (m3Psi1915) in 23S rRNA. The sequence is that of Ribosomal RNA large subunit methyltransferase H from Staphylococcus haemolyticus (strain JCSC1435).